We begin with the raw amino-acid sequence, 76 residues long: Putative cation transport regulator ChaB (76 aa).

The protein belongs to the ChaB family. Monomer.

Might be a regulator of the sodium-potassium/proton antiporter ChaA. The polypeptide is Putative cation transport regulator ChaB (Escherichia coli O157:H7).